The chain runs to 137 residues: Large ribosomal subunit protein uL16c (137 aa).

Belongs to the universal ribosomal protein uL16 family. Part of the 50S ribosomal subunit.

It is found in the plastid. The protein is Large ribosomal subunit protein uL16c of Aneura mirabilis (Parasitic liverwort).